The chain runs to 734 residues: Phosphoribosylformylglycinamidine synthase subunit PurL (734 aa).

The active site involves histidine 46. Residues tyrosine 49 and lysine 88 each coordinate ATP. A Mg(2+)-binding site is contributed by glutamate 90. Substrate-binding positions include 91-94 and arginine 113; that span reads SHNH. Catalysis depends on histidine 92, which acts as the Proton acceptor. Aspartate 114 provides a ligand contact to Mg(2+). Residue glutamine 237 coordinates substrate. A Mg(2+)-binding site is contributed by aspartate 265. Substrate is bound at residue 309-311; that stretch reads ESQ. Positions 489 and 526 each coordinate ATP. Asparagine 527 provides a ligand contact to Mg(2+). Serine 529 contacts substrate.

Belongs to the FGAMS family. In terms of assembly, monomer. Part of the FGAM synthase complex composed of 1 PurL, 1 PurQ and 2 PurS subunits.

The protein localises to the cytoplasm. The catalysed reaction is N(2)-formyl-N(1)-(5-phospho-beta-D-ribosyl)glycinamide + L-glutamine + ATP + H2O = 2-formamido-N(1)-(5-O-phospho-beta-D-ribosyl)acetamidine + L-glutamate + ADP + phosphate + H(+). It functions in the pathway purine metabolism; IMP biosynthesis via de novo pathway; 5-amino-1-(5-phospho-D-ribosyl)imidazole from N(2)-formyl-N(1)-(5-phospho-D-ribosyl)glycinamide: step 1/2. Functionally, part of the phosphoribosylformylglycinamidine synthase complex involved in the purines biosynthetic pathway. Catalyzes the ATP-dependent conversion of formylglycinamide ribonucleotide (FGAR) and glutamine to yield formylglycinamidine ribonucleotide (FGAM) and glutamate. The FGAM synthase complex is composed of three subunits. PurQ produces an ammonia molecule by converting glutamine to glutamate. PurL transfers the ammonia molecule to FGAR to form FGAM in an ATP-dependent manner. PurS interacts with PurQ and PurL and is thought to assist in the transfer of the ammonia molecule from PurQ to PurL. The polypeptide is Phosphoribosylformylglycinamidine synthase subunit PurL (Gluconobacter oxydans (strain 621H) (Gluconobacter suboxydans)).